Consider the following 105-residue polypeptide: Large ribosomal subunit protein uL24 (105 aa).

This sequence belongs to the universal ribosomal protein uL24 family. Part of the 50S ribosomal subunit.

Functionally, one of two assembly initiator proteins, it binds directly to the 5'-end of the 23S rRNA, where it nucleates assembly of the 50S subunit. Its function is as follows. One of the proteins that surrounds the polypeptide exit tunnel on the outside of the subunit. The chain is Large ribosomal subunit protein uL24 from Mycolicibacterium vanbaalenii (strain DSM 7251 / JCM 13017 / BCRC 16820 / KCTC 9966 / NRRL B-24157 / PYR-1) (Mycobacterium vanbaalenii).